Here is a 602-residue protein sequence, read N- to C-terminus: Pro-neuregulin-1, membrane-bound isoform (602 aa).

At 1-206 the chain is on the extracellular side; the sequence is MWATSEGPLQ…MEAEELYQKR (206 aa). The N-linked (GlcNAc...) asparagine glycan is linked to Asn21. The Ig-like C2-type domain maps to 29–123; sequence PKLKEMKNQE…DSTKASVIIT (95 aa). Cys49 and Cys105 are disulfide-bonded. N-linked (GlcNAc...) asparagine glycosylation is found at Asn113 and Asn126. Residues 137–181 enclose the EGF-like domain; that stretch reads HLTKCDIKQKAFCVNGGECYMVKDLPNPPRYLCRCPNEFTGDRCQ. Intrachain disulfides connect Cys141–Cys155, Cys149–Cys169, and Cys171–Cys180. Residues 207-229 form a helical membrane-spanning segment; sequence VLTITGICIALLVVGIMCVVAYC. Topologically, residues 230 to 602 are cytoplasmic; sequence KTKKQRKKLH…VIANQDPIAV (373 aa). 4 disordered regions span residues 293–366, 391–421, 460–479, and 486–553; these read ETSF…EGNS, MTTPARMSPVDFHTPTSPKSPPSEMSPPVSS, FNSFHNNPTHESNSLPPSPL, and EYET…FLSI. Residues 294 to 314 show a composition bias toward low complexity; sequence TSFSTSHYTSTTHHSMTVTQT. Over residues 315–324 the composition is skewed to polar residues; it reads PSHSWSNGHT. Over residues 325–341 the composition is skewed to low complexity; it reads ESILSESHSVLVSSSVE. Polar residues predominate over residues 460 to 474; it reads FNSFHNNPTHESNSL. The span at 504–514 shows a compositional bias: basic residues; sequence TNSRRVKRTKP. The segment covering 527–536 has biased composition (low complexity); the sequence is DTSSQSTSSE.

The protein belongs to the neuregulin family. Post-translationally, proteolytic cleavage close to the plasma membrane on the external face leads to the release of the soluble growth factor form. In terms of processing, extensive glycosylation precedes the proteolytic cleavage.

The protein localises to the cell membrane. The protein resides in the secreted. Its function is as follows. Direct ligand for the ERBB tyrosine kinase receptors. The multiple isoforms perform diverse functions: cysteine-rich domain containing isoforms (isoform 2-isoform 4) probably regulate the expression of nicotinic acetylcholine receptors at developing interneuronal synapses. Isoform Ig-NRG is required for the initial induction and/or maintenance of the mature levels of acetylcholine receptors at neuromuscular synapses. Binds to ERBB3 and integrins to form a complex which is essential for NRG1-ERBB signaling. The chain is Pro-neuregulin-1, membrane-bound isoform (NRG1) from Gallus gallus (Chicken).